Here is a 382-residue protein sequence, read N- to C-terminus: Putative 12-oxophytodienoate reductase 3 (382 aa).

FMN is bound by residues 37–39 (PLT), A70, and Q112. Residues 120 to 138 (STNDQQPNGQAPISSTDKQ) show a composition bias toward polar residues. A disordered region spans residues 120–147 (STNDQQPNGQAPISSTDKQITPDDSHTV). 184–187 (HGAH) is a binding site for substrate. Catalysis depends on Y189, which acts as the Proton donor. Residue R236 coordinates FMN. Position 277 (R277) interacts with substrate. FMN is bound by residues G307 and 328 to 329 (GR).

It belongs to the NADH:flavin oxidoreductase/NADH oxidase family. FMN serves as cofactor.

Functionally, putative oxophytodienoate reductase that may be involved in the biosynthesis or metabolism of oxylipin signaling molecules. This is Putative 12-oxophytodienoate reductase 3 (OPR3) from Oryza sativa subsp. japonica (Rice).